The primary structure comprises 321 residues: Mas-related G-protein coupled receptor member H (321 aa).

Topologically, residues 1 to 35 are extracellular; the sequence is MEPLATTLCPQECTQTTRNETPNETTWSSEHVTKY. N-linked (GlcNAc...) asparagine glycosylation is present at N23. A helical membrane pass occupies residues 36-56; sequence TYISISLVICSLGLVGNGLLI. The Cytoplasmic segment spans residues 57–71; that stretch reads WFLIFCIKRKPFTIY. Residues 72 to 92 form a helical membrane-spanning segment; the sequence is ILHLAFADFMVLLCSSIIQLV. Topologically, residues 93-102 are extracellular; it reads NTFHIYDSTL. The helical transmembrane segment at 103-126 threads the bilayer; it reads VSYAVLFMIFGYNTGLHLLTAISV. The Cytoplasmic segment spans residues 127 to 147; sequence ERCLSVLYPIWYHCRRPKHQS. Residues 148–168 traverse the membrane as a helical segment; sequence TVACTLLWALSVLVSGLENFF. At 169–188 the chain is on the extracellular side; that stretch reads CILEVKPQFPECRYVYIFSC. Residues 189-209 traverse the membrane as a helical segment; the sequence is TLTFLVFVPLMVFSNLILFIQ. The Cytoplasmic portion of the chain corresponds to 210 to 225; that stretch reads VCCNLKPRQPAKLYVI. A helical membrane pass occupies residues 226–246; it reads IMATVILFLVFAMPMKVLLII. A topological domain (extracellular) is located at residue G247. The helical transmembrane segment at 248–271 threads the bilayer; the sequence is YYSNSTDASVWKSLPYLNMLSTIN. The Cytoplasmic segment spans residues 272 to 320; sequence CSINPIVYFVVGSLRRKRSRKSLKEALQKVFEEKPVVASRENEVQFSLP.

Belongs to the G-protein coupled receptor 1 family. Mas subfamily.

The protein localises to the cell membrane. Functionally, orphan receptor. May regulate nociceptor function and/or development, including the sensation or modulation of pain. This Rattus norvegicus (Rat) protein is Mas-related G-protein coupled receptor member H (Mrgprh).